The following is a 256-amino-acid chain: Hemin import ATP-binding protein HmuV (256 aa).

An ABC transporter domain is found at 2–238 (ISAQNLVYSL…QALTMLYGAD (237 aa)). 34–41 (GPNGAGKS) contacts ATP.

It belongs to the ABC transporter superfamily. Heme (hemin) importer (TC 3.A.1.14.5) family. The complex is composed of two ATP-binding proteins (HmuV), two transmembrane proteins (HmuU) and a solute-binding protein (HmuT).

Its subcellular location is the cell inner membrane. Functionally, part of the ABC transporter complex HmuTUV involved in hemin import. Responsible for energy coupling to the transport system. This Escherichia coli O6:K15:H31 (strain 536 / UPEC) protein is Hemin import ATP-binding protein HmuV.